A 118-amino-acid chain; its full sequence is Large ribosomal subunit protein uL18 (118 aa).

It belongs to the universal ribosomal protein uL18 family. Part of the 50S ribosomal subunit; part of the 5S rRNA/L5/L18/L25 subcomplex. Contacts the 5S and 23S rRNAs.

Functionally, this is one of the proteins that bind and probably mediate the attachment of the 5S RNA into the large ribosomal subunit, where it forms part of the central protuberance. This Rickettsia felis (strain ATCC VR-1525 / URRWXCal2) (Rickettsia azadi) protein is Large ribosomal subunit protein uL18.